The chain runs to 307 residues: MQIRHFLQFKDFDRQEYEYLFDRTRWIKNEFKQYRRYWPLTDRTLAMIFEKHSTRTRLSFEAGMHQLGGSAIYLSTRDTQLGRGEPVEDAARVISRMVDIITLRTHEHGVIERFAENSRVPVINGLTDEYHPCQILADIFTFMEHRGSIAGKTVAWIGDSNNVCNTWLQAAEVFDFNVHVSTPPGYEVEPERAGLYGTDHYEQFVSPHDAVKDADLVTTDVWTSMGFEDEADTRKNDFADFRVDAEMMACAKEEALFMHCLPAHRGEEVDAEVIDGPQSVVWDEAENRLHTQKALMEYLLLGRIGVR.

Residues 53-56 (STRT), Q80, R104, and 131-134 (HPCQ) contribute to the carbamoyl phosphate site. Residues N162, D220, and 224-225 (SM) contribute to the L-ornithine site. Residues 260-261 (CL) and R288 contribute to the carbamoyl phosphate site.

This sequence belongs to the aspartate/ornithine carbamoyltransferase superfamily. OTCase family.

It localises to the cytoplasm. The catalysed reaction is carbamoyl phosphate + L-ornithine = L-citrulline + phosphate + H(+). Its pathway is amino-acid biosynthesis; L-arginine biosynthesis; L-arginine from L-ornithine and carbamoyl phosphate: step 1/3. Reversibly catalyzes the transfer of the carbamoyl group from carbamoyl phosphate (CP) to the N(epsilon) atom of ornithine (ORN) to produce L-citrulline. This is Ornithine carbamoyltransferase from Nitrosomonas europaea (strain ATCC 19718 / CIP 103999 / KCTC 2705 / NBRC 14298).